Consider the following 409-residue polypeptide: N-acetylglucosamine-6-phosphate deacetylase (409 aa).

Glu143 is a binding site for a divalent metal cation. 154–155 (AH) contributes to the substrate binding site. 2 residues coordinate a divalent metal cation: His211 and His232. Residues 235-236 (NA), Arg243, and 269-272 (DGIH) each bind substrate. Asp294 functions as the Proton donor/acceptor in the catalytic mechanism. Residue 328-330 (LGG) participates in substrate binding.

The protein belongs to the metallo-dependent hydrolases superfamily. NagA family. The cofactor is a divalent metal cation.

The catalysed reaction is N-acetyl-D-glucosamine 6-phosphate + H2O = D-glucosamine 6-phosphate + acetate. It functions in the pathway amino-sugar metabolism; N-acetylneuraminate degradation. Its function is as follows. Hydrolyzes the N-glycolyl group from N-glycolylglucosamine 6-phosphate (GlcNGc-6-P) in the N-glycolylneuraminic acid (Neu5Gc) degradation pathway. The chain is N-acetylglucosamine-6-phosphate deacetylase (Amdhd2) from Mus musculus (Mouse).